The sequence spans 192 residues: Hydrophobin-like protein rodD (192 aa).

3 disulfides stabilise this stretch: C45/C106, C50/C99, and C107/C112.

It belongs to the fungal hydrophobin family. As to quaternary structure, self-assembles to form functional amyloid fibrils called rodlets. Self-assembly into fibrillar rodlets occurs spontaneously at hydrophobic:hydrophilic interfaces and the rodlets further associate laterally to form amphipathic monolayers.

Aerial growth, conidiation, and dispersal of filamentous fungi in the environment rely upon a capability of their secreting small amphipathic proteins called hydrophobins (HPBs) with low sequence identity. Class I can self-assemble into an outermost layer of rodlet bundles on aerial cell surfaces, conferring cellular hydrophobicity that supports fungal growth, development and dispersal; whereas Class II form highly ordered films at water-air interfaces through intermolecular interactions but contribute nothing to the rodlet structure. RodD is a an hydrophobin-like protein that, unlike rodA, is not required for rodlet formation. This chain is Hydrophobin-like protein rodD, found in Aspergillus fumigatus (strain ATCC MYA-4609 / CBS 101355 / FGSC A1100 / Af293) (Neosartorya fumigata).